Here is a 196-residue protein sequence, read N- to C-terminus: Probable histone chaperone ASF1A (196 aa).

The span at 146–157 (VTKFPIDFHPEE) shows a compositional bias: basic and acidic residues. The disordered stretch occupies residues 146–196 (VTKFPIDFHPEEEQTAATAAPPEQSDEQQPNVNGEAQVLPDQSVEPKPEES).

Belongs to the ASF1 family. As to quaternary structure, interacts with histone H3 and histone H4. Component of the HIRA complex made of UBN1, UBN2, ASF1A, CABIN1 and HIRA. Interacts with HIRA. Expressed in leaves and flower buds.

Its subcellular location is the nucleus. It localises to the nucleolus. In terms of biological role, histone chaperone that facilitates histone deposition and histone exchange and removal during nucleosome assembly and disassembly. While encoded by a region of the Arabidopsis thaliana genome that is homologous to the Brassica S-locus for self incompatibility, this protein may not play the same role in Arabidopsis thaliana. The polypeptide is Probable histone chaperone ASF1A (ASF1A) (Arabidopsis thaliana (Mouse-ear cress)).